A 186-amino-acid chain; its full sequence is Ribosome-recycling factor (186 aa).

It belongs to the RRF family.

The protein localises to the cytoplasm. Functionally, responsible for the release of ribosomes from messenger RNA at the termination of protein biosynthesis. May increase the efficiency of translation by recycling ribosomes from one round of translation to another. This chain is Ribosome-recycling factor, found in Bordetella petrii (strain ATCC BAA-461 / DSM 12804 / CCUG 43448).